Here is a 207-residue protein sequence, read N- to C-terminus: Guanylate kinase (207 aa).

The Guanylate kinase-like domain occupies 5 to 183 (GTLYIISAPS…ALYELEAIVE (179 aa)). An ATP-binding site is contributed by 12–19 (APSGAGKT).

The protein belongs to the guanylate kinase family.

It localises to the cytoplasm. The catalysed reaction is GMP + ATP = GDP + ADP. In terms of biological role, essential for recycling GMP and indirectly, cGMP. The sequence is that of Guanylate kinase from Alcanivorax borkumensis (strain ATCC 700651 / DSM 11573 / NCIMB 13689 / SK2).